We begin with the raw amino-acid sequence, 331 residues long: PIN2/TERF1-interacting telomerase inhibitor 1 (331 aa).

Disordered stretches follow at residues 1–28, 156–175, and 197–331; these read MSML…DDSK, AQDG…LTTT, and SKSQ…KVSR. The 47-residue stretch at 26–72 folds into the G-patch domain; sequence DSKFGQKMLEKMGWSKGKGLGAQEQGATEHIKVKVKNNHLGLGATNN. Ser-233 bears the Phosphoserine mark. The segment covering 236–246 has biased composition (basic residues); it reads HKAKRHKKKKR. Basic and acidic residues predominate over residues 247–261; sequence VEAERGPAAKKRDQV. Positions 254–328 are telomerase inhibitory domain (TID); that stretch reads AAKKRDQVEL…DSAPVKKKKK (75 aa). Residues Ser-269, Ser-274, and Ser-277 each carry the phosphoserine modification. The TBM motif lies at 291–301; sequence QDDVPKPRKRR. The segment covering 297-306 has biased composition (basic residues); sequence PRKRRAKKTL.

The protein belongs to the PINX1 family. Interacts with MCRS1, TERT, TERF1, NCL/nucleolin, and the telomerase RNA.

The protein resides in the nucleus. The protein localises to the nucleolus. It localises to the chromosome. Its subcellular location is the telomere. It is found in the centromere. The protein resides in the kinetochore. Microtubule-binding protein essential for faithful chromosome segregation. Mediates TRF1 and TERT accumulation in nucleolus and enhances TRF1 binding to telomeres. Inhibits telomerase activity. May inhibit cell proliferation and act as tumor suppressor. This is PIN2/TERF1-interacting telomerase inhibitor 1 from Rattus norvegicus (Rat).